The following is a 520-amino-acid chain: MFCTRGLLFFAFLAGLDIEFTGLRSNLSGPQQISLFDLPSEWYLKTRQSVQQFTVCQIGLSVFSAIEGEANKYIAHSCNFYLFPTTFGILDSEFSFQASSVQFLNQYGFNYNKFLKNGIPYMNEEQEKKIRHDILTGNWRVRSSPDKDQIKVVIDEVTRWLELAKEGDWMTLPGITGFQAFEVQLVLRQALPNIWTVLKDEGVVVKKVSKQHRWYLQNTSCDRESCWKENILLSARGFSVFFQMLVKAQKPLVGHNMMMDLLHLHEKFFRPLPESYDQFKQNIHSLFPVLIDTKSVTKDIWKEMNFPRVSNLSEVYEVLNSDLNPTKNSGPEIVHASRCEKYVETKCPHEAAYDAFLCGSVLLKVAHLLLQKIYHIDPVPESSFPQYLDVLAPYVNQVNLIRAGVPKINFSGPDYPSIRPPILILSVKRWPGVSEQQVYHKFQNLCKFDVRRLTRSQFLLLTNKFKDARNILKEYRDHPTLCISLYRYWRHSPNVNCLLQVCGIVTAWALLAFILGRSGT.

Mg(2+) is bound by residues D17, E19, D260, and D354. Residues 495–515 (VNCLLQVCGIVTAWALLAFIL) form a helical membrane-spanning segment.

It belongs to the CAF1 family. The cofactor is Mg(2+).

The protein localises to the endoplasmic reticulum membrane. It carries out the reaction Exonucleolytic cleavage of poly(A) to 5'-AMP.. Functionally, 3'-exoribonuclease that has a preference for poly(A) tails of mRNAs, thereby efficiently degrading poly(A) tails. Exonucleolytic degradation of the poly(A) tail is often the first step in the decay of eukaryotic mRNAs and is also used to silence certain maternal mRNAs translationally during oocyte maturation and early embryonic development. May act as a regulator of multipotency in embryonic stem cells. Is a critical factor for proper spermatogenesis, involved in pre-piRNAs processing to generate mature piRNAs. This chain is Poly(A)-specific ribonuclease PNLDC1, found in Homo sapiens (Human).